The sequence spans 317 residues: Probable methyltransferase tdiE (317 aa).

The protein belongs to the methyltransferase superfamily. LaeA methyltransferase family.

It participates in secondary metabolite biosynthesis. In terms of biological role, probable methyltransferase; part of the gene cluster that mediates the biosynthesis of terrequinone A, an antitumor agent. The first step in the biosynthetic pathway for terrequinone A is formation of indole pyruvic acid (IPA) from L-tryptophan by the aminotransferase tdiD. The nonribosomal peptide synthase tdiA then immediately converts unstable IPA to didemethylasterriquinone D (DDAQ D), via condensation of 2 IPA molecules. The symmetric connectivity of the 2 IPA molecules is thought to arise by head-to-tail dual Claisen condensations facilitated by the TE domain. TdiB then catalyzes reverse prenylation by transferring dimethylallyl diphosphate to carbon atom 2' of DDAQ D, to yield asterriquinone C-1. Finally, tdiC and tdiE enzymes robustly convert asterriquinone C-1 to terrequinone A via a transformation involving regular prenylation at carbon atom 5, which requires elimination of the hydroxy group on C-5. In Emericella nidulans (strain FGSC A4 / ATCC 38163 / CBS 112.46 / NRRL 194 / M139) (Aspergillus nidulans), this protein is Probable methyltransferase tdiE.